Consider the following 455-residue polypeptide: Kynurenine 3-monooxygenase (455 aa).

It belongs to the aromatic-ring hydroxylase family. KMO subfamily. FAD is required as a cofactor.

It catalyses the reaction L-kynurenine + NADPH + O2 + H(+) = 3-hydroxy-L-kynurenine + NADP(+) + H2O. Its pathway is cofactor biosynthesis; NAD(+) biosynthesis; quinolinate from L-kynurenine: step 1/3. In terms of biological role, catalyzes the hydroxylation of L-kynurenine (L-Kyn) to form 3-hydroxy-L-kynurenine (L-3OHKyn). Required for synthesis of quinolinic acid. The protein is Kynurenine 3-monooxygenase of Xanthomonas euvesicatoria pv. vesicatoria (strain 85-10) (Xanthomonas campestris pv. vesicatoria).